The primary structure comprises 298 residues: MALDFLAGCAGGVAGVLVGHPFDTVKVRLQVQSVEKPQYRGTLHCFQAIIKQESVLGLYRGLGSPLLGLTFINALVFGVQGNTLRALGRDSPLNQFLAGAAAGAIQCVICCPMELAKTRLQLQEAGPARTYRGPLDCLAQIYRQEGLRGVNRGMVSTLLRETPSFGVYFLTYDVLTRALGCEPGDRLLVPKLLLAGGTSGIASWLSTYPVDVVKSRLQADGLQGAPRYRGIVDCVQQSYREEGWRVFTRGLASTLLRAFPVNAATFATVTVVLSYARGEEARLEGDAGSAALAQPSSL.

6 consecutive transmembrane segments (helical) span residues 2-22, 61-81, 96-116, 153-172, 187-207, and 255-275; these read ALDFLAGCAGGVAGVLVGHPF, GLGSPLLGLTFINALVFGVQG, FLAGAAAGAIQCVICCPMELA, GMVSTLLRETPSFGVYFLTY, LLVPKLLLAGGTSGIASWLST, and LLRAFPVNAATFATVTVVLSY. 3 Solcar repeats span residues 2-86, 90-178, and 185-275; these read ALDF…TLRA, DSPL…LTRA, and DRLL…VLSY.

It belongs to the mitochondrial carrier (TC 2.A.29) family.

It localises to the mitochondrion inner membrane. It catalyses the reaction L-lysine(out) + L-arginine(in) = L-lysine(in) + L-arginine(out). The enzyme catalyses L-histidine(out) + L-arginine(in) = L-histidine(in) + L-arginine(out). It carries out the reaction L-ornithine(in) + L-arginine(out) = L-ornithine(out) + L-arginine(in). The catalysed reaction is L-homoarginine(in) + L-arginine(out) = L-homoarginine(out) + L-arginine(in). It catalyses the reaction N(omega)-methyl-L-arginine(in) + L-arginine(out) = N(omega)-methyl-L-arginine(out) + L-arginine(in). The enzyme catalyses L-arginine(in) = L-arginine(out). It carries out the reaction L-lysine(in) = L-lysine(out). The catalysed reaction is L-ornithine(in) = L-ornithine(out). It catalyses the reaction L-histidine(out) = L-histidine(in). Its function is as follows. Mitochondrial transporter of arginine, lysine, homoarginine, methylarginine and, to a much lesser extent, ornithine and histidine. Does not transport carnitine nor acylcarnitines. Functions by both counter-exchange and uniport mechanisms. Plays a physiological role in the import of basic amino acids into mitochondria for mitochondrial protein synthesis and amino acid degradation. This chain is Mitochondrial basic amino acids transporter (SLC25A29), found in Bos taurus (Bovine).